A 530-amino-acid chain; its full sequence is MVACDLLWLAAASCLLTLVFPSTTHQGYGNPRNTSNVDLDCGAPGSSSAGICFDPCQNHTVLNDPSRSTENTVSSEECDSHLRGWYRFVGDGGVKMPETCVNVYRCHTYAPMWLSGSHPILGDGIVNRTACANWNENCCFWSSEVQVKACLGESGEYHVYKLQGTPECSLRYCTDPSTAPKKCEIACRPEEECVFQNNSWTCVCRQDLNVSDTLSLQPLLDCGANEIKVKLDKCLLGGLGFKEDIITYLNDRNCRGTMKDEPNNWVSTTSPVVANDCGNILENNGTQAIYRNTLSLATDFIIRDFLVNVNFQCAYPLDMNVSLQTALQPIVSSLNVDVGGAGEFTVTMALFQDQSYTHPYEGSKVLLPVENILYVGALLNRGDTSRFKLLLTNCYATPSGDRNDIVKYFIIRNRCPNQRDSTINVEENGVSSESRFSVQMFMFAGNYDLVFLHCEVYLCDSTTEQCQPSCSTSRLRSSEPAIDLTRVLDIGPITKKSVQNPDTSNGTPRNTGFLLAWPTFFLPVFLAWLF.

Residues 1 to 21 form the signal peptide; that stretch reads MVACDLLWLAAASCLLTLVFP. Asparagine 33 is a glycosylation site (N-linked (GlcNAc...) asparagine). Cystine bridges form between cysteine 41–cysteine 52, cysteine 56–cysteine 150, cysteine 78–cysteine 168, cysteine 100–cysteine 138, cysteine 106–cysteine 173, cysteine 131–cysteine 139, cysteine 183–cysteine 193, cysteine 187–cysteine 202, cysteine 204–cysteine 234, cysteine 222–cysteine 313, and cysteine 254–cysteine 277. A D10C region spans residues 54 to 74; that stretch reads DPCQNHTVLNDPSRSTENTVS. N-linked (GlcNAc...) asparagine glycosylation is found at asparagine 58 and asparagine 127. The EGF-like domain maps to 179 to 223; that stretch reads APKKCEIACRPEEECVFQNNSWTCVCRQDLNVSDTLSLQPLLDCG. N-linked (GlcNAc...) asparagine glycans are attached at residues asparagine 197 and asparagine 209. Residues 221–314 are ZP-N; sequence DCGANEIKVK…FLVNVNFQCA (94 aa). The ZP domain maps to 221-477; it reads DCGANEIKVK…PSCSTSRLRS (257 aa). Asparagine 284 and asparagine 320 each carry an N-linked (GlcNAc...) asparagine glycan. Residues 315-338 are flexible ZP-N/ZP-C linker; that stretch reads YPLDMNVSLQTALQPIVSSLNVDV. Positions 339–350 are internal hydrophobic patch (IHP); sequence GGAGEFTVTMAL. The interval 339–477 is ZP-C; sequence GGAGEFTVTM…PSCSTSRLRS (139 aa). 3 cysteine pairs are disulfide-bonded: cysteine 394–cysteine 454, cysteine 415–cysteine 470, and cysteine 459–cysteine 466. The segment at 484–492 is external hydrophobic patch (EHP); sequence LTRVLDIGP. Asparagine 505 is lipidated: GPI-anchor amidated asparagine. The propeptide at 506–530 is removed in mature form; that stretch reads GTPRNTGFLLAWPTFFLPVFLAWLF.

Interacts with SYCN. Interacts with bacterial adhesin fimH. In terms of processing, N-glycosylated. In terms of tissue distribution, expressed in pancreas.

The protein localises to the zymogen granule membrane. It is found in the secreted. The protein resides in the cell membrane. Its subcellular location is the apical cell membrane. It localises to the membrane raft. The protein localises to the endosome. In terms of biological role, functions as an intestinal M-cell transcytotic receptor specific of type-I-piliated bacteria that participates in the mucosal immune response toward these bacteria. At the apical membrane of M-cells it binds fimH, a protein of the bacteria type I pilus tip. Internalizes bound bacteria, like E.coli and S.typhimurium, from the lumen of the intestine and delivers them, through M-cells, to the underlying organized lymphoid follicles where they are captured by antigen-presenting dendritic cells to elicit a mucosal immune response. This chain is Pancreatic secretory granule membrane major glycoprotein GP2, found in Rattus norvegicus (Rat).